Consider the following 199-residue polypeptide: Casparian strip membrane protein 1 (199 aa).

The Cytoplasmic segment spans residues 1 to 37 (MKSESAAIDIPESSSVAKGKAPLIAVSRNEKGGYRKG). Residues 38 to 58 (IAIFDFILRLAAIATALAAAA) traverse the membrane as a helical segment. Residues 59 to 87 (AMGTSDETLPFFTQFFQFQASYDDLPTFQ) are Extracellular-facing. A helical transmembrane segment spans residues 88–108 (FFVIAIAIVGGYLVLSLPFSI). Over 109–120 (VAIVRPHAVGPR) the chain is Cytoplasmic. The chain crosses the membrane as a helical span at residues 121-141 (LLLIILDAVALTLNTAAGAAA). At 142–173 (AAIVYLAHNGNSNTNWLAICQQYGDFCQKVSG) the chain is on the extracellular side. Residues 174-194 (AVVASFITVVIFVFLIVLSAF) traverse the membrane as a helical segment. Residues 195 to 199 (ALRRH) are Cytoplasmic-facing.

Belongs to the Casparian strip membrane proteins (CASP) family. Homodimer and heterodimers.

It is found in the cell membrane. Regulates membrane-cell wall junctions and localized cell wall deposition. Required for establishment of the Casparian strip membrane domain (CSD) and the subsequent formation of Casparian strips, a cell wall modification of the root endodermis that determines an apoplastic barrier between the intraorganismal apoplasm and the extraorganismal apoplasm and prevents lateral diffusion. The chain is Casparian strip membrane protein 1 from Populus trichocarpa (Western balsam poplar).